We begin with the raw amino-acid sequence, 593 residues long: Arginine--tRNA ligase (593 aa).

The 'HIGH' region motif lies at 138-148 (ANPTGPLHVGH).

The protein belongs to the class-I aminoacyl-tRNA synthetase family. As to quaternary structure, monomer.

It is found in the cytoplasm. The catalysed reaction is tRNA(Arg) + L-arginine + ATP = L-arginyl-tRNA(Arg) + AMP + diphosphate. This is Arginine--tRNA ligase from Burkholderia orbicola (strain MC0-3).